We begin with the raw amino-acid sequence, 178 residues long: N-alpha-acetyltransferase 20 (178 aa).

Positions 2–157 (TTLRAFTCDD…DAYDMRKALS (156 aa)) constitute an N-acetyltransferase domain.

It belongs to the acetyltransferase family. ARD1 subfamily. In terms of assembly, component of the N-terminal acetyltransferase B (NatB) complex which is composed of NAA20 and NAA25.

The protein resides in the cytoplasm. It localises to the nucleus. It catalyses the reaction N-terminal L-methionyl-L-asparaginyl-[protein] + acetyl-CoA = N-terminal N(alpha)-acetyl-L-methionyl-L-asparaginyl-[protein] + CoA + H(+). It carries out the reaction N-terminal L-methionyl-L-glutaminyl-[protein] + acetyl-CoA = N-terminal N(alpha)-acetyl-L-methionyl-L-glutaminyl-[protein] + CoA + H(+). The enzyme catalyses N-terminal L-methionyl-L-aspartyl-[protein] + acetyl-CoA = N-terminal N(alpha)-acetyl-L-methionyl-L-aspartyl-[protein] + CoA + H(+). The catalysed reaction is N-terminal L-methionyl-L-glutamyl-[protein] + acetyl-CoA = N-terminal N(alpha)-acetyl-L-methionyl-L-glutamyl-[protein] + CoA + H(+). Functionally, catalytic subunit of the NatB complex which catalyzes acetylation of the N-terminal methionine residues of peptides beginning with Met-Asp, Met-Glu, Met-Asn and Met-Gln. Proteins with cell cycle functions are overrepresented in the pool of NatB substrates. Required for maintaining the structure and function of actomyosin fibers and for proper cellular migration. This is N-alpha-acetyltransferase 20 (NAA20) from Homo sapiens (Human).